We begin with the raw amino-acid sequence, 281 residues long: 2,3,4,5-tetrahydropyridine-2,6-dicarboxylate N-succinyltransferase (281 aa).

Positions 108 and 145 each coordinate substrate.

The protein belongs to the transferase hexapeptide repeat family. Homotrimer.

It is found in the cytoplasm. It catalyses the reaction (S)-2,3,4,5-tetrahydrodipicolinate + succinyl-CoA + H2O = (S)-2-succinylamino-6-oxoheptanedioate + CoA. Its pathway is amino-acid biosynthesis; L-lysine biosynthesis via DAP pathway; LL-2,6-diaminopimelate from (S)-tetrahydrodipicolinate (succinylase route): step 1/3. In Methylobacterium nodulans (strain LMG 21967 / CNCM I-2342 / ORS 2060), this protein is 2,3,4,5-tetrahydropyridine-2,6-dicarboxylate N-succinyltransferase.